A 134-amino-acid chain; its full sequence is D-ribose pyranase (134 aa).

His-20 serves as the catalytic Proton donor. Residues Asp-28, His-101, and 123–125 (YSN) contribute to the substrate site.

This sequence belongs to the RbsD / FucU family. RbsD subfamily. As to quaternary structure, homodecamer.

The protein localises to the cytoplasm. The enzyme catalyses beta-D-ribopyranose = beta-D-ribofuranose. It participates in carbohydrate metabolism; D-ribose degradation; D-ribose 5-phosphate from beta-D-ribopyranose: step 1/2. Its function is as follows. Catalyzes the interconversion of beta-pyran and beta-furan forms of D-ribose. The polypeptide is D-ribose pyranase (Pseudomonas syringae pv. syringae (strain B728a)).